Consider the following 49-residue polypeptide: Large ribosomal subunit protein bL33B (49 aa).

This sequence belongs to the bacterial ribosomal protein bL33 family.

The polypeptide is Large ribosomal subunit protein bL33B (Lactobacillus gasseri (strain ATCC 33323 / DSM 20243 / BCRC 14619 / CIP 102991 / JCM 1131 / KCTC 3163 / NCIMB 11718 / NCTC 13722 / AM63)).